The following is a 467-amino-acid chain: Ribulose bisphosphate carboxylase large chain (467 aa).

A propeptide spanning residues 1 to 2 is cleaved from the precursor; that stretch reads MS. P3 is modified (N-acetylproline). K14 is modified (N6,N6,N6-trimethyllysine). Substrate is bound by residues N123 and T173. K175 functions as the Proton acceptor in the catalytic mechanism. K177 contacts substrate. The Mg(2+) site is built by K201, D203, and E204. K201 is subject to N6-carboxylysine. H294 serves as the catalytic Proton acceptor. Residues R295, H327, and S379 each contribute to the substrate site.

It belongs to the RuBisCO large chain family. Type I subfamily. In terms of assembly, heterohexadecamer of 8 large chains and 8 small chains; disulfide-linked. The disulfide link is formed within the large subunit homodimers. It depends on Mg(2+) as a cofactor. The disulfide bond which can form in the large chain dimeric partners within the hexadecamer appears to be associated with oxidative stress and protein turnover.

The protein localises to the plastid. The protein resides in the chloroplast. It catalyses the reaction 2 (2R)-3-phosphoglycerate + 2 H(+) = D-ribulose 1,5-bisphosphate + CO2 + H2O. The catalysed reaction is D-ribulose 1,5-bisphosphate + O2 = 2-phosphoglycolate + (2R)-3-phosphoglycerate + 2 H(+). Its function is as follows. RuBisCO catalyzes two reactions: the carboxylation of D-ribulose 1,5-bisphosphate, the primary event in carbon dioxide fixation, as well as the oxidative fragmentation of the pentose substrate in the photorespiration process. Both reactions occur simultaneously and in competition at the same active site. The polypeptide is Ribulose bisphosphate carboxylase large chain (Serenoa repens (Saw palmetto)).